A 513-amino-acid polypeptide reads, in one-letter code: Cytochrome P450 monooxygenase asaD (513 aa).

Residues 14 to 34 (ILYPFLFGIFAVASLCIATLL) traverse the membrane as a helical segment. 4 N-linked (GlcNAc...) asparagine glycosylation sites follow: N258, N370, N431, and N441. Heme is bound at residue C461.

It belongs to the cytochrome P450 family. Requires heme as cofactor.

The protein localises to the membrane. It functions in the pathway secondary metabolite biosynthesis. Functionally, cytochrome P450 monooxygenase; part of the gene cluster that mediates the biosynthesis of aspergillic acid, a hydroxamic acid-containing pyrazinone with aliphatic side chains that originates from leucine (Leu) and isoleucine (Ile). Aspergillic acid has antibiotic properties and was shown to be lethal to mice. The first step in the pathway is the production of deoxyaspergillic acid via a condensation between the Ile amine and the Leu carboxylic acid, followed by a reductive release from the protein forming the dipeptide aldehyde NH(2)-Leu-Ile-CHO, which could undergo an intermolecular cyclization resulting in a dihydropyrazinone. As the NRPS asaC lacks a condensation domain, it is improbable that it is responsible for condensation of Leu and Ile. One possibility is that asaC acts on a previously condensed dipeptide and functions as a Leu-Ile reductase to yield deoxyaspergillic acid. After asaC forms deoxyaspergillic acid, the cytochrome P450 asaD oxidizes the pyrazinone to the hydroxamic acid-containing bioactive metabolite aspergillic acid. The hydroxylase/desaturase asaB can then convert aspergillic acid to hydroxyaspergillic acid. Both aspergillic acid and hydroxyaspergillic acid can form complexes with iron producing ferriaspergillin analogs. The protein is Cytochrome P450 monooxygenase asaD of Aspergillus flavus (strain ATCC 200026 / FGSC A1120 / IAM 13836 / NRRL 3357 / JCM 12722 / SRRC 167).